Consider the following 369-residue polypeptide: DNA replication and repair protein RecF (369 aa).

30–37 (GDNAQGKT) contributes to the ATP binding site.

It belongs to the RecF family.

The protein resides in the cytoplasm. In terms of biological role, the RecF protein is involved in DNA metabolism; it is required for DNA replication and normal SOS inducibility. RecF binds preferentially to single-stranded, linear DNA. It also seems to bind ATP. This is DNA replication and repair protein RecF from Streptococcus equi subsp. zooepidemicus (strain MGCS10565).